The chain runs to 81 residues: Photosystem I iron-sulfur center (81 aa).

4Fe-4S ferredoxin-type domains are found at residues 1–31 (MSHK…MVPW) and 39–68 (IASS…IRVY). [4Fe-4S] cluster contacts are provided by Cys-11, Cys-14, Cys-17, Cys-21, Cys-48, Cys-51, Cys-54, and Cys-58.

The cyanobacterial PSI reaction center is composed of one copy each of PsaA,B,C,D,E,F,I,J,K,L,M and X, and forms trimeric complexes. [4Fe-4S] cluster serves as cofactor.

It is found in the cellular thylakoid membrane. The enzyme catalyses reduced [plastocyanin] + hnu + oxidized [2Fe-2S]-[ferredoxin] = oxidized [plastocyanin] + reduced [2Fe-2S]-[ferredoxin]. Its function is as follows. Apoprotein for the two 4Fe-4S centers FA and FB of photosystem I (PSI); essential for photochemical activity. FB is the terminal electron acceptor of PSI, donating electrons to ferredoxin. The C-terminus interacts with PsaA/B/D and helps assemble the protein into the PSI complex. Required for binding of PsaD and PsaE to PSI. PSI is a plastocyanin/cytochrome c6-ferredoxin oxidoreductase, converting photonic excitation into a charge separation, which transfers an electron from the donor P700 chlorophyll pair to the spectroscopically characterized acceptors A0, A1, FX, FA and FB in turn. The protein is Photosystem I iron-sulfur center of Crocosphaera subtropica (strain ATCC 51142 / BH68) (Cyanothece sp. (strain ATCC 51142)).